Reading from the N-terminus, the 244-residue chain is Na(+)-translocating NADH-quinone reductase subunit E (244 aa).

Transmembrane regions (helical) follow at residues 11–31, 50–70, 90–110, 123–143, 153–173, and 191–211; these read LLGI…TFLG, MSVA…HYFI, FLEL…LELL, GIFL…LFGI, VVFS…FATI, and ISFI…GIDI.

Belongs to the NqrDE/RnfAE family. As to quaternary structure, composed of six subunits; NqrA, NqrB, NqrC, NqrD, NqrE and NqrF.

The protein resides in the cell inner membrane. It carries out the reaction a ubiquinone + n Na(+)(in) + NADH + H(+) = a ubiquinol + n Na(+)(out) + NAD(+). Its function is as follows. NQR complex catalyzes the reduction of ubiquinone-1 to ubiquinol by two successive reactions, coupled with the transport of Na(+) ions from the cytoplasm to the periplasm. NqrA to NqrE are probably involved in the second step, the conversion of ubisemiquinone to ubiquinol. The protein is Na(+)-translocating NADH-quinone reductase subunit E of Chlamydia trachomatis serovar L2 (strain ATCC VR-902B / DSM 19102 / 434/Bu).